Reading from the N-terminus, the 162-residue chain is Urease subunit beta (162 aa).

Residues 116 to 162 (WRRSSAAGDAPQELPQVEAAERGRKLDDATDVDTNVGTEEGFEEGRN) are disordered. Positions 134 to 143 (AAERGRKLDD) are enriched in basic and acidic residues.

Belongs to the urease beta subunit family. As to quaternary structure, heterotrimer of UreA (gamma), UreB (beta) and UreC (alpha) subunits. Three heterotrimers associate to form the active enzyme.

The protein resides in the cytoplasm. The enzyme catalyses urea + 2 H2O + H(+) = hydrogencarbonate + 2 NH4(+). The protein operates within nitrogen metabolism; urea degradation; CO(2) and NH(3) from urea (urease route): step 1/1. In Corynebacterium glutamicum (strain ATCC 13032 / DSM 20300 / JCM 1318 / BCRC 11384 / CCUG 27702 / LMG 3730 / NBRC 12168 / NCIMB 10025 / NRRL B-2784 / 534), this protein is Urease subunit beta.